A 162-amino-acid polypeptide reads, in one-letter code: 2-C-methyl-D-erythritol 2,4-cyclodiphosphate synthase (162 aa).

A divalent metal cation-binding residues include aspartate 9 and histidine 11. 4-CDP-2-C-methyl-D-erythritol 2-phosphate-binding positions include 9 to 11 (DVH) and 37 to 38 (HS). Histidine 45 is an a divalent metal cation binding site.

Belongs to the IspF family. In terms of assembly, homotrimer. A divalent metal cation is required as a cofactor.

The catalysed reaction is 4-CDP-2-C-methyl-D-erythritol 2-phosphate = 2-C-methyl-D-erythritol 2,4-cyclic diphosphate + CMP. The protein operates within isoprenoid biosynthesis; isopentenyl diphosphate biosynthesis via DXP pathway; isopentenyl diphosphate from 1-deoxy-D-xylulose 5-phosphate: step 4/6. Its function is as follows. Involved in the biosynthesis of isopentenyl diphosphate (IPP) and dimethylallyl diphosphate (DMAPP), two major building blocks of isoprenoid compounds. Catalyzes the conversion of 4-diphosphocytidyl-2-C-methyl-D-erythritol 2-phosphate (CDP-ME2P) to 2-C-methyl-D-erythritol 2,4-cyclodiphosphate (ME-CPP) with a corresponding release of cytidine 5-monophosphate (CMP). This chain is 2-C-methyl-D-erythritol 2,4-cyclodiphosphate synthase, found in Petrotoga mobilis (strain DSM 10674 / SJ95).